The chain runs to 531 residues: Isocitrate lyase (531 aa).

Residue 101 to 103 (SGW) participates in substrate binding. Aspartate 184 is a Mg(2+) binding site. Residue cysteine 222 is the Proton acceptor of the active site. Residues 223–224 (GH), 380–384 (NNSPS), and threonine 451 contribute to the substrate site.

This sequence belongs to the isocitrate lyase/PEP mutase superfamily. Isocitrate lyase family. Homotetramer. Mg(2+) is required as a cofactor.

The enzyme catalyses D-threo-isocitrate = glyoxylate + succinate. It functions in the pathway carbohydrate metabolism; glyoxylate cycle; (S)-malate from isocitrate: step 1/2. In terms of biological role, involved in the metabolic adaptation in response to environmental changes. Catalyzes the reversible formation of succinate and glyoxylate from isocitrate, a key step of the glyoxylate cycle, which operates as an anaplerotic route for replenishing the tricarboxylic acid cycle during growth on fatty acid substrates. The polypeptide is Isocitrate lyase (Pseudomonas aeruginosa (strain ATCC 15692 / DSM 22644 / CIP 104116 / JCM 14847 / LMG 12228 / 1C / PRS 101 / PAO1)).